Consider the following 187-residue polypeptide: Superoxide dismutase [Cu-Zn] (187 aa).

The signal sequence occupies residues 1 to 23 (MMKMKTLLALAISGICAAGVANA). Positions 80, 82, and 105 each coordinate Cu cation. A disulfide bridge connects residues C87 and C183. Zn(2+) contacts are provided by H105, H114, H123, and D126. H161 is a binding site for Cu cation.

It belongs to the Cu-Zn superoxide dismutase family. Homodimer. Requires Cu cation as cofactor. The cofactor is Zn(2+).

Its subcellular location is the periplasm. It carries out the reaction 2 superoxide + 2 H(+) = H2O2 + O2. Its function is as follows. Destroys radicals which are normally produced within the cells and which are toxic to biological systems. Functionally, may confer survival advantage by accelerating dismutation of superoxide of environmental origin to hydrogen peroxide, disruptive to the normal mucociliary clearance process in the host. This is Superoxide dismutase [Cu-Zn] (sodC) from Haemophilus parainfluenzae.